The primary structure comprises 152 residues: Methylglyoxal synthase (152 aa).

The region spanning Arg-6–Lys-152 is the MGS-like domain. Substrate-binding positions include His-19, Lys-23, Thr-45 to Thr-48, and Ser-65 to Gly-66. Asp-71 functions as the Proton donor/acceptor in the catalytic mechanism. Residue His-98 coordinates substrate.

Belongs to the methylglyoxal synthase family.

The catalysed reaction is dihydroxyacetone phosphate = methylglyoxal + phosphate. In terms of biological role, catalyzes the formation of methylglyoxal from dihydroxyacetone phosphate. The protein is Methylglyoxal synthase of Pectobacterium atrosepticum (strain SCRI 1043 / ATCC BAA-672) (Erwinia carotovora subsp. atroseptica).